Here is a 488-residue protein sequence, read N- to C-terminus: E3 ubiquitin-protein ligase TRIM39 (488 aa).

Residues 29–70 (CSVCLEYLKEPVIIECGHNFCKACITRWWEDLERDFPCPVCR) form an RING-type zinc finger. The B box-type zinc-finger motif lies at 102–143 (RDESLCSQHHEPLSLFCYEDQEAVCLICAISHTHRAHTVVPM). C107, H110, C129, and H135 together coordinate Zn(2+). Positions 181–250 (ELKRLVESRR…AHLAAEVEGK (70 aa)) form a coiled coil. Interaction with CDKN1A regions lie at residues 268-307 (KCEK…QLIA) and 359-488 (TSGR…TDWE). A B30.2/SPRY domain is found at 289–484 (SHFPRQYFAL…NAAPLTIRPP (196 aa)).

This sequence belongs to the TRIM/RBCC family. Interacts with MOAP1. Interacts with CDKN1A. In terms of processing, autoubiquitinated.

It localises to the cytoplasm. The protein localises to the cytosol. The protein resides in the mitochondrion. Its subcellular location is the nucleus. It catalyses the reaction S-ubiquitinyl-[E2 ubiquitin-conjugating enzyme]-L-cysteine + [acceptor protein]-L-lysine = [E2 ubiquitin-conjugating enzyme]-L-cysteine + N(6)-ubiquitinyl-[acceptor protein]-L-lysine.. It participates in protein modification; protein ubiquitination. E3 ubiquitin-protein ligase. May facilitate apoptosis by inhibiting APC/C-Cdh1-mediated poly-ubiquitination and subsequent proteasome-mediated degradation of the pro-apoptotic protein MOAP1. Regulates the G1/S transition of the cell cycle and DNA damage-induced G2 arrest by stabilizing CDKN1A/p21. Positively regulates CDKN1A/p21 stability by competing with DTL for CDKN1A/p21 binding, therefore disrupting DCX(DTL) E3 ubiquitin ligase complex-mediated CDKN1A/p21 ubiquitination and degradation. The sequence is that of E3 ubiquitin-protein ligase TRIM39 (Trim39) from Rattus norvegicus (Rat).